Here is a 780-residue protein sequence, read N- to C-terminus: ATP-dependent 6-phosphofructokinase, muscle type (780 aa).

Thr-2 bears the N-acetylthreonine mark. The tract at residues 2–390 is N-terminal catalytic PFK domain 1; that stretch reads THEEHHAAKS…NWEVYKLLAH (389 aa). ATP is bound by residues Gly-25, 88–89, and 118–121; these read RC and GDGS. Asp-119 is a binding site for Mg(2+). Residues 164 to 166, Arg-201, 208 to 210, Glu-264, Arg-292, and 298 to 301 each bind substrate; these read SID, MGR, and HVQR. Catalysis depends on Asp-166, which acts as the Proton acceptor. Ser-377 carries the phosphoserine modification. Residues 391 to 401 form an interdomain linker region; it reads VRPPVTKSGSY. The tract at residues 402–780 is C-terminal regulatory PFK domain 2; that stretch reads TVAVMNVGAP…TRKRSGEATI (379 aa). Beta-D-fructose 2,6-bisphosphate contacts are provided by residues Arg-471 and 528–532; that span reads TVSNN. Ser-530 carries an O-linked (GlcNAc) serine glycan. Lys-557 carries the N6-(2-hydroxyisobutyryl)lysine modification. Residues Arg-566, 573–575, Glu-629, Arg-655, and 661–664 each bind beta-D-fructose 2,6-bisphosphate; these read MGG and HMQQ. Ser-667 carries the phosphoserine modification. Beta-D-fructose 2,6-bisphosphate is bound at residue Arg-735. Ser-775 bears the Phosphoserine mark.

This sequence belongs to the phosphofructokinase type A (PFKA) family. ATP-dependent PFK group I subfamily. Eukaryotic two domain clade 'E' sub-subfamily. As to quaternary structure, homo- and heterotetramers. Phosphofructokinase (PFK) enzyme functions as a tetramer composed of different combinations of 3 types of subunits, called PFKM (M), PFKL (L) and PFKP (P). The composition of the PFK tetramer differs according to the tissue type it is present in. The kinetic and regulatory properties of the tetrameric enzyme are dependent on the subunit composition, hence can vary across tissues. Interacts (via C-terminus) with HK1 (via N-terminal spermatogenic cell-specific region). The cofactor is Mg(2+). In terms of processing, glcNAcylation decreases enzyme activity.

The protein localises to the cytoplasm. The enzyme catalyses beta-D-fructose 6-phosphate + ATP = beta-D-fructose 1,6-bisphosphate + ADP + H(+). Its pathway is carbohydrate degradation; glycolysis; D-glyceraldehyde 3-phosphate and glycerone phosphate from D-glucose: step 3/4. With respect to regulation, allosterically activated by ADP, AMP, or fructose 2,6-bisphosphate, and allosterically inhibited by ATP or citrate. Functionally, catalyzes the phosphorylation of D-fructose 6-phosphate to fructose 1,6-bisphosphate by ATP, the first committing step of glycolysis. In Sus scrofa (Pig), this protein is ATP-dependent 6-phosphofructokinase, muscle type (PFKM).